The following is a 263-amino-acid chain: uncharacterized protein (263 aa).

16-23 contributes to the ATP binding site; sequence AKGGTGKT.

This sequence to M.jannaschii MJ0547 and MJ0169.

This is an uncharacterized protein from Methanocaldococcus jannaschii (strain ATCC 43067 / DSM 2661 / JAL-1 / JCM 10045 / NBRC 100440) (Methanococcus jannaschii).